Reading from the N-terminus, the 69-residue chain is ATP synthase F(0) complex subunit e, mitochondrial (69 aa).

An N6-acetyllysine modification is found at Lys34. A Phosphoserine modification is found at Ser66.

Belongs to the ATPase e subunit family. In terms of assembly, component of the ATP synthase complex composed at least of ATP5F1A/subunit alpha, ATP5F1B/subunit beta, ATP5MC1/subunit c (homooctomer), MT-ATP6/subunit a, MT-ATP8/subunit 8, ATP5ME/subunit e, ATP5MF/subunit f, ATP5MG/subunit g, ATP5MK/subunit k, ATP5MJ/subunit j, ATP5F1C/subunit gamma, ATP5F1D/subunit delta, ATP5F1E/subunit epsilon, ATP5PF/subunit F6, ATP5PB/subunit b, ATP5PD/subunit d, ATP5PO/subunit OSCP. ATP synthase complex consists of a soluble F(1) head domain (subunits alpha(3) and beta(3)) - the catalytic core - and a membrane F(0) domain - the membrane proton channel (subunits c, a, 8, e, f, g, k and j). These two domains are linked by a central stalk (subunits gamma, delta, and epsilon) rotating inside the F1 region and a stationary peripheral stalk (subunits F6, b, d, and OSCP).

The protein localises to the mitochondrion. The protein resides in the mitochondrion inner membrane. In terms of biological role, subunit e, of the mitochondrial membrane ATP synthase complex (F(1)F(0) ATP synthase or Complex V) that produces ATP from ADP in the presence of a proton gradient across the membrane which is generated by electron transport complexes of the respiratory chain. ATP synthase complex consist of a soluble F(1) head domain - the catalytic core - and a membrane F(1) domain - the membrane proton channel. These two domains are linked by a central stalk rotating inside the F(1) region and a stationary peripheral stalk. During catalysis, ATP synthesis in the catalytic domain of F(1) is coupled via a rotary mechanism of the central stalk subunits to proton translocation. In vivo, can only synthesize ATP although its ATP hydrolase activity can be activated artificially in vitro. Part of the complex F(0) domain. This Homo sapiens (Human) protein is ATP synthase F(0) complex subunit e, mitochondrial.